The sequence spans 292 residues: D-galactarolactone isomerase (292 aa).

It belongs to the metallo-dependent hydrolases superfamily. Does not require a metal cofactor. serves as cofactor.

It carries out the reaction D-galactaro-1,5-lactone = D-galactaro-1,4-lactone. It participates in carbohydrate acid metabolism; D-galacturonate degradation via prokaryotic oxidative pathway. Its function is as follows. Catalyzes the isomerization of D-galactaro-1,5-lactone to D-galactaro-1,4-lactone. This is a step in the oxidative degradation pathway of D-galacturonate, which allows A.tumefaciens to utilize D-galacturonate as a sole carbon source. The polypeptide is D-galactarolactone isomerase (Agrobacterium fabrum (strain C58 / ATCC 33970) (Agrobacterium tumefaciens (strain C58))).